We begin with the raw amino-acid sequence, 798 residues long: Disintegrin and metalloproteinase domain-containing protein B (798 aa).

Positions 1–23 (MKAFSCLLAVIATAASLFQHVDA) are cleaved as a signal peptide. Topologically, residues 24–706 (SHARDKLNNI…VSDWVSRHKP (683 aa)) are extracellular. N-linked (GlcNAc...) asparagine glycans are attached at residues Asn-32, Asn-226, Asn-227, Asn-313, and Asn-407. A Peptidase M12B domain is found at 271 to 510 (KVALIGVVAD…RTILTNCLTT (240 aa)). 3 cysteine pairs are disulfide-bonded: Cys-395–Cys-495, Cys-448–Cys-459, and Cys-580–Cys-600. His-431 is a binding site for Zn(2+). Glu-432 is an active-site residue. Positions 435 and 441 each coordinate Zn(2+). The 90-residue stretch at 519–608 (GQQCGNGIVE…DCPHDIHSKD (90 aa)) folds into the Disintegrin domain. Residues 707-727 (IVIGVAVGAGCLLLLAIASCI) traverse the membrane as a helical segment. The Cytoplasmic segment spans residues 728 to 798 (CGRSRRQRPR…PGHMPPTRYA (71 aa)). The disordered stretch occupies residues 734–798 (QRPRNRKMPP…PGHMPPTRYA (65 aa)). The span at 775-792 (NNIPPPINAPPPAYPGHM) shows a compositional bias: pro residues.

It depends on Zn(2+) as a cofactor.

The protein localises to the membrane. Its function is as follows. Probable zinc protease. The protein is Disintegrin and metalloproteinase domain-containing protein B (ADM-B) of Trichophyton verrucosum (strain HKI 0517).